We begin with the raw amino-acid sequence, 365 residues long: MKLSALLALSASTAVLAAPAVHHSDNHHHNDKRAVVTVTQYVNADGAVVIPAATTATSAAADGKVESVAAATTTLSSTAAAATTSAAASSSSSSSSSSSSSSSVGSGDFEDGTISCSDFPSGQGAVSLDWLGLGGWASIMDMNGNTATSCQDGYYCSYACSPGYAKTQWPSEQPSDGRSVGGLYCKNGKLYRSNTDTNSLCVEGQGSAQAVNKVSGSIAICGTDYPGSENMVVPTVVGAGSSQPINVIKEDSYYQWQGKKTSAQYYVNNAGVSVEDGCIWGTEGSGVGNWAPVVLGAGYTDGITYLSIIPNPNNKEAPNFNIKIVATDGSTVNGACSYENGVYSGSGSDGCTVSVTSGSANFVFY.

The first 17 residues, 1-17 (MKLSALLALSASTAVLA), serve as a signal peptide directing secretion.

It belongs to the SUN family.

It is found in the mitochondrion outer membrane. Its subcellular location is the secreted. The protein resides in the cell wall. Its function is as follows. Involved in aging, oxidative stress response, and in the regulation of mitochondrial biogenesis. Inactivation of UTH1 increases life span, leads to higher resistance to heat stress and against hydrogen peroxide, and increases sensitivity to the superoxide radical-generating drug paraquat and to copper. Also required for the selective autophagic degradation of mitochondria (mitophagy) in response to nitrogen starvation. Involved in the remodeling of the cell wall during the various phases of yeast culture development and under various environmental conditions and plays a role in septation. Involved in cell sensitivity to boric acid. This Saccharomyces cerevisiae (strain ATCC 204508 / S288c) (Baker's yeast) protein is Probable secreted beta-glucosidase UTH1 (UTH1).